Here is a 345-residue protein sequence, read N- to C-terminus: MKVAIIGATGYGGIELIRLLEQHPYFSIASLHSFSQVGECITNVYPHFQNVLVHTLQEIDVEEIEKEAEIVFLATPAGVSAELTPKLLAVGLKVIDLSGDFRMKDPFIYEQWYKRAAAKEGVLREAVYGLSEWKRSEIQKANLIANPGCFATAALLAILPLVRSGIIEEDSIIIDAKSGVSGAGKTPTTMTHFPELYDNLRIYKVNEHQHIPEIEQMLAEWNRETKPITFSTHLIPISRGIMVTLYAKVKREMEIEQLQQLYEEAYEQSAFIRIRMQGEFPSPKEVRGSNYCDMGIAYDERTGRVTVVSVIDNMMKGAAGQAIQNANIVAGLEETIGLQHMPLYL.

The active site involves Cys-149.

Belongs to the NAGSA dehydrogenase family. Type 1 subfamily.

It is found in the cytoplasm. It carries out the reaction N-acetyl-L-glutamate 5-semialdehyde + phosphate + NADP(+) = N-acetyl-L-glutamyl 5-phosphate + NADPH + H(+). It participates in amino-acid biosynthesis; L-arginine biosynthesis; N(2)-acetyl-L-ornithine from L-glutamate: step 3/4. Its function is as follows. Catalyzes the NADPH-dependent reduction of N-acetyl-5-glutamyl phosphate to yield N-acetyl-L-glutamate 5-semialdehyde. This Bacillus cereus (strain 03BB102) protein is N-acetyl-gamma-glutamyl-phosphate reductase.